Reading from the N-terminus, the 321-residue chain is ATP-dependent 6-phosphofructokinase (321 aa).

Gly-12 serves as a coordination point for ATP. Position 22–26 (22–26) interacts with ADP; the sequence is RGVVR. ATP is bound by residues 73–74 and 103–106; these read RF and GDGS. Asp-104 lines the Mg(2+) pocket. A substrate-binding site is contributed by 127-129; it reads TID. Asp-129 serves as the catalytic Proton acceptor. ADP is bound at residue Arg-156. Substrate contacts are provided by residues Arg-164 and 171–173; that span reads MGR. ADP-binding positions include 187–189, Lys-213, and 215–217; these read GCE and KRH. Substrate-binding positions include Glu-224, Arg-245, and 251 to 254; that span reads HTQR.

The protein belongs to the phosphofructokinase type A (PFKA) family. ATP-dependent PFK group I subfamily. Prokaryotic clade 'B1' sub-subfamily. As to quaternary structure, homotetramer. Mg(2+) is required as a cofactor.

The protein localises to the cytoplasm. It catalyses the reaction beta-D-fructose 6-phosphate + ATP = beta-D-fructose 1,6-bisphosphate + ADP + H(+). Its pathway is carbohydrate degradation; glycolysis; D-glyceraldehyde 3-phosphate and glycerone phosphate from D-glucose: step 3/4. Allosterically activated by ADP and other diphosphonucleosides, and allosterically inhibited by phosphoenolpyruvate. In terms of biological role, catalyzes the phosphorylation of D-fructose 6-phosphate to fructose 1,6-bisphosphate by ATP, the first committing step of glycolysis. The protein is ATP-dependent 6-phosphofructokinase of Glaesserella parasuis serovar 5 (strain SH0165) (Haemophilus parasuis).